A 423-amino-acid polypeptide reads, in one-letter code: 5-hydroxytryptamine receptor 1A (423 aa).

Residues 1-38 lie on the Extracellular side of the membrane; it reads MEGLSPRQGNNTTSSEGPFGTLGNATGISDVTFSYQVI. N-linked (GlcNAc...) asparagine glycosylation is found at N10, N11, and N24. A helical membrane pass occupies residues 39-59; the sequence is TSLLLGTLIFCAVLGNACVVA. Topologically, residues 60-73 are cytoplasmic; sequence AIALERSLQNVANY. The chain crosses the membrane as a helical span at residues 74–98; the sequence is LIGSLAVTDLMVSVLVLPMAALYQV. At 99 to 107 the chain is on the extracellular side; it reads LNKWTLGQV. A helical membrane pass occupies residues 108 to 132; sequence TCDLFIALDVLCCTSSILHLCAIAL. A disulfide bridge connects residues C109 and C187. Serotonin-binding residues include D116 and C120. The short motif at 133–135 is the DRY motif; important for ligand-induced conformation changes element; the sequence is DRY. Residues 133-152 are Cytoplasmic-facing; that stretch reads DRYWAITDPIDYVNKRTPRR. A helical membrane pass occupies residues 153–174; it reads AAALISLTWLIGFLISIPPMLG. The Extracellular segment spans residues 175 to 193; that stretch reads WRTPEDRSDPDACTISKDH. A helical transmembrane segment spans residues 194–216; sequence GYTIYSTFGAFYIPLLLMLVLYG. The Cytoplasmic portion of the chain corresponds to 217–346; that stretch reads RIFRAARFRI…LARERKTVKT (130 aa). Positions 235–277 are disordered; the sequence is RKGADARSGVSPAPQPRKSVNGEPGGREWRQGPGSQAGGPLCT. 1D-myo-inositol 4-phosphate contacts are provided by K345, T346, and G352. Residues 347 to 370 form a helical membrane-spanning segment; it reads LGIIMGTFILCWLPFFIVALVLPF. Residues 371–378 are Extracellular-facing; the sequence is CESSCHMP. The helical transmembrane segment at 379–403 threads the bilayer; that stretch reads TLLGAIINWLGYSNSLLNPVIYAYF. Residues 396 to 400 carry the NPxxY motif; important for ligand-induced conformation changes and signaling motif; that stretch reads NPVIY. 1D-myo-inositol 4-phosphate-binding residues include F403, N404, and K405. Over 404-423 the chain is Cytoplasmic; it reads NKDFQNAFKKIVRCKFCRRR.

This sequence belongs to the G-protein coupled receptor 1 family. 5-hydroxytryptamine receptor subfamily. HTR1A sub-subfamily. Heterodimer; heterodimerizes with GPER1. Interacts with YIF1B. Interacts with GPR39 and GALR1.

The protein localises to the cell membrane. It is found in the cell projection. Its subcellular location is the dendrite. Its activity is regulated as follows. G-protein coupled receptor activity is regulated by lipids: phosphatidylinositol 4-phosphate increases HTR1A-mediated activity. Functionally, G-protein coupled receptor for 5-hydroxytryptamine (serotonin). Also functions as a receptor for various drugs and psychoactive substances. Ligand binding causes a conformation change that triggers signaling via guanine nucleotide-binding proteins (G proteins) and modulates the activity of downstream effectors, such as adenylate cyclase. HTR1A is coupled to G(i)/G(o) G alpha proteins and mediates inhibitory neurotransmission: signaling inhibits adenylate cyclase activity and activates a phosphatidylinositol-calcium second messenger system that regulates the release of Ca(2+) ions from intracellular stores. Beta-arrestin family members regulate signaling by mediating both receptor desensitization and resensitization processes. In Canis lupus familiaris (Dog), this protein is 5-hydroxytryptamine receptor 1A (HTR1A).